A 743-amino-acid polypeptide reads, in one-letter code: Elongation factor 2 (743 aa).

Positions 19–265 (NNIRNIGIIA…MVVRHLPSPK (247 aa)) constitute a tr-type G domain. GTP-binding positions include 28-35 (AHIHHGKT), 94-98 (DTPGH), and 148-151 (NKVD). Residue histidine 615 is modified to Diphthamide.

The protein belongs to the TRAFAC class translation factor GTPase superfamily. Classic translation factor GTPase family. EF-G/EF-2 subfamily.

It localises to the cytoplasm. Catalyzes the GTP-dependent ribosomal translocation step during translation elongation. During this step, the ribosome changes from the pre-translocational (PRE) to the post-translocational (POST) state as the newly formed A-site-bound peptidyl-tRNA and P-site-bound deacylated tRNA move to the P and E sites, respectively. Catalyzes the coordinated movement of the two tRNA molecules, the mRNA and conformational changes in the ribosome. This Nanoarchaeum equitans (strain Kin4-M) protein is Elongation factor 2.